A 523-amino-acid polypeptide reads, in one-letter code: NAD(P)H-quinone oxidoreductase subunit 2 (523 aa).

Transmembrane regions (helical) follow at residues 29–49 (AVLP…VDLA), 57–77 (WVPP…ALQW), 94–114 (LAVA…LISW), 132–152 (LAAT…SIFI), 182–202 (LLVG…LYGL), 221–241 (PIAA…IAAV), 255–275 (PTPV…ALAL), 291–311 (LLFT…ALAQ), 317–337 (MLAY…VCGT), 345–365 (VLYM…IILF), 389–409 (LGLS…GFFG), 424–444 (LLVV…ISVI), and 477–497 (VALI…NPLF).

This sequence belongs to the complex I subunit 2 family. NDH-1 can be composed of about 15 different subunits; different subcomplexes with different compositions have been identified which probably have different functions.

The protein resides in the cellular thylakoid membrane. The enzyme catalyses a plastoquinone + NADH + (n+1) H(+)(in) = a plastoquinol + NAD(+) + n H(+)(out). It carries out the reaction a plastoquinone + NADPH + (n+1) H(+)(in) = a plastoquinol + NADP(+) + n H(+)(out). NDH-1 shuttles electrons from an unknown electron donor, via FMN and iron-sulfur (Fe-S) centers, to quinones in the respiratory and/or the photosynthetic chain. The immediate electron acceptor for the enzyme in this species is believed to be plastoquinone. Couples the redox reaction to proton translocation, and thus conserves the redox energy in a proton gradient. Cyanobacterial NDH-1 also plays a role in inorganic carbon-concentration. The polypeptide is NAD(P)H-quinone oxidoreductase subunit 2 (Synechococcus sp. (strain CC9902)).